A 1283-amino-acid polypeptide reads, in one-letter code: Peroxisomal ATPase PEX1 (1283 aa).

The disordered stretch occupies residues 346–367 (SKTKQNVLSPEKEKQMSEPLDQ). Residue serine 354 is modified to Phosphoserine. Residues 355 to 367 (PEKEKQMSEPLDQ) are compositionally biased toward basic and acidic residues. Residues 599-606 (GGKGSGKS) and 881-888 (GPPGTGKT) contribute to the ATP site. A phosphoserine mark is found at serine 1181, serine 1209, and serine 1211. Positions 1260-1283 (FQNPKRRKNQSGTMFRPGQKVTLA) are disordered.

This sequence belongs to the AAA ATPase family. Homooligomer; homooligomerizes in the cytosol, interaction with PEX6 promotes dissociation of the homooligomer. Interacts with PEX6; forming the PEX1-PEX6 AAA ATPase complex, which is composed of a heterohexamer formed by a trimer of PEX1-PEX6 dimers. Interacts indirectly with PEX26, via its interaction with PEX6.

Its subcellular location is the cytoplasm. The protein localises to the cytosol. The protein resides in the peroxisome membrane. It carries out the reaction ATP + H2O = ADP + phosphate + H(+). In terms of biological role, component of the PEX1-PEX6 AAA ATPase complex, a protein dislocase complex that mediates the ATP-dependent extraction of the PEX5 receptor from peroxisomal membranes, an essential step for PEX5 recycling. Specifically recognizes PEX5 monoubiquitinated at 'Cys-11', and pulls it out of the peroxisome lumen through the PEX2-PEX10-PEX12 retrotranslocation channel. Extraction by the PEX1-PEX6 AAA ATPase complex is accompanied by unfolding of the TPR repeats and release of bound cargo from PEX5. This is Peroxisomal ATPase PEX1 from Homo sapiens (Human).